The chain runs to 171 residues: Adenine phosphoribosyltransferase (171 aa).

It belongs to the purine/pyrimidine phosphoribosyltransferase family. Homodimer.

It localises to the cytoplasm. The enzyme catalyses AMP + diphosphate = 5-phospho-alpha-D-ribose 1-diphosphate + adenine. Its pathway is purine metabolism; AMP biosynthesis via salvage pathway; AMP from adenine: step 1/1. Functionally, catalyzes a salvage reaction resulting in the formation of AMP, that is energically less costly than de novo synthesis. In Acetivibrio thermocellus (strain ATCC 27405 / DSM 1237 / JCM 9322 / NBRC 103400 / NCIMB 10682 / NRRL B-4536 / VPI 7372) (Clostridium thermocellum), this protein is Adenine phosphoribosyltransferase.